A 119-amino-acid polypeptide reads, in one-letter code: Large ribosomal subunit protein bL20 (119 aa).

It belongs to the bacterial ribosomal protein bL20 family.

Functionally, binds directly to 23S ribosomal RNA and is necessary for the in vitro assembly process of the 50S ribosomal subunit. It is not involved in the protein synthesizing functions of that subunit. The sequence is that of Large ribosomal subunit protein bL20 from Sorangium cellulosum (strain So ce56) (Polyangium cellulosum (strain So ce56)).